A 932-amino-acid polypeptide reads, in one-letter code: Glycine dehydrogenase (decarboxylating) (932 aa).

The residue at position 685 (Lys-685) is an N6-(pyridoxal phosphate)lysine.

Belongs to the GcvP family. As to quaternary structure, the glycine cleavage system is composed of four proteins: P, T, L and H. The cofactor is pyridoxal 5'-phosphate.

It catalyses the reaction N(6)-[(R)-lipoyl]-L-lysyl-[glycine-cleavage complex H protein] + glycine + H(+) = N(6)-[(R)-S(8)-aminomethyldihydrolipoyl]-L-lysyl-[glycine-cleavage complex H protein] + CO2. The glycine cleavage system catalyzes the degradation of glycine. The P protein binds the alpha-amino group of glycine through its pyridoxal phosphate cofactor; CO(2) is released and the remaining methylamine moiety is then transferred to the lipoamide cofactor of the H protein. This is Glycine dehydrogenase (decarboxylating) from Brucella melitensis biotype 1 (strain ATCC 23456 / CCUG 17765 / NCTC 10094 / 16M).